Consider the following 127-residue polypeptide: Aspartate 1-decarboxylase (127 aa).

The Schiff-base intermediate with substrate; via pyruvic acid role is filled by serine 25. Pyruvic acid (Ser) is present on serine 25. Substrate is bound at residue threonine 57. Tyrosine 58 serves as the catalytic Proton donor. 73–75 (GAA) serves as a coordination point for substrate.

It belongs to the PanD family. Heterooctamer of four alpha and four beta subunits. The cofactor is pyruvate. In terms of processing, is synthesized initially as an inactive proenzyme, which is activated by self-cleavage at a specific serine bond to produce a beta-subunit with a hydroxyl group at its C-terminus and an alpha-subunit with a pyruvoyl group at its N-terminus.

It is found in the cytoplasm. It carries out the reaction L-aspartate + H(+) = beta-alanine + CO2. The protein operates within cofactor biosynthesis; (R)-pantothenate biosynthesis; beta-alanine from L-aspartate: step 1/1. Functionally, catalyzes the pyruvoyl-dependent decarboxylation of aspartate to produce beta-alanine. The chain is Aspartate 1-decarboxylase from Bacillus pumilus (strain SAFR-032).